Consider the following 433-residue polypeptide: Tol-Pal system protein TolB (433 aa).

Residues 1-26 (MSLMTKLGFRALVASCLIAAGGAAHA) form the signal peptide.

It belongs to the TolB family. The Tol-Pal system is composed of five core proteins: the inner membrane proteins TolA, TolQ and TolR, the periplasmic protein TolB and the outer membrane protein Pal. They form a network linking the inner and outer membranes and the peptidoglycan layer.

It is found in the periplasm. Its function is as follows. Part of the Tol-Pal system, which plays a role in outer membrane invagination during cell division and is important for maintaining outer membrane integrity. The polypeptide is Tol-Pal system protein TolB (Burkholderia thailandensis (strain ATCC 700388 / DSM 13276 / CCUG 48851 / CIP 106301 / E264)).